We begin with the raw amino-acid sequence, 415 residues long: Queuine tRNA-ribosyltransferase accessory subunit 2 (415 aa).

Residues Cys351, Cys353, Cys356, and His382 each contribute to the Zn(2+) site.

This sequence belongs to the queuine tRNA-ribosyltransferase family. QTRT2 subfamily. Heterodimer of a catalytic subunit QTRT1 and an accessory subunit QTRT2. It depends on Zn(2+) as a cofactor.

It localises to the cytoplasm. It is found in the mitochondrion outer membrane. Functionally, non-catalytic subunit of the queuine tRNA-ribosyltransferase (TGT) that catalyzes the base-exchange of a guanine (G) residue with queuine (Q) at position 34 (anticodon wobble position) in tRNAs with GU(N) anticodons (tRNA-Asp, -Asn, -His and -Tyr), resulting in the hypermodified nucleoside queuosine (7-(((4,5-cis-dihydroxy-2-cyclopenten-1-yl)amino)methyl)-7-deazaguanosine). In Pongo abelii (Sumatran orangutan), this protein is Queuine tRNA-ribosyltransferase accessory subunit 2.